Consider the following 368-residue polypeptide: UPF0284 protein SYNPCC7002_A1742 (368 aa).

It belongs to the UPF0284 family.

This Picosynechococcus sp. (strain ATCC 27264 / PCC 7002 / PR-6) (Agmenellum quadruplicatum) protein is UPF0284 protein SYNPCC7002_A1742.